The following is a 228-amino-acid chain: Large ribosomal subunit protein uL1 (228 aa).

The protein belongs to the universal ribosomal protein uL1 family. As to quaternary structure, part of the 50S ribosomal subunit.

Its function is as follows. Binds directly to 23S rRNA. The L1 stalk is quite mobile in the ribosome, and is involved in E site tRNA release. In terms of biological role, protein L1 is also a translational repressor protein, it controls the translation of the L11 operon by binding to its mRNA. The protein is Large ribosomal subunit protein uL1 of Clavibacter sepedonicus (Clavibacter michiganensis subsp. sepedonicus).